The sequence spans 190 residues: Translation initiation factor IF-3 (190 aa).

The tract at residues 159–190 (QSEVQQKPKREGRNMIMFLSPRKSPLIKKDNE) is disordered.

The protein belongs to the IF-3 family. Monomer.

Its subcellular location is the cytoplasm. In terms of biological role, IF-3 binds to the 30S ribosomal subunit and shifts the equilibrium between 70S ribosomes and their 50S and 30S subunits in favor of the free subunits, thus enhancing the availability of 30S subunits on which protein synthesis initiation begins. The protein is Translation initiation factor IF-3 of Prochlorococcus marinus (strain MIT 9215).